A 255-amino-acid chain; its full sequence is 28.1 kDa virulence protein (255 aa).

Belongs to the SpvA family.

Its function is as follows. Not known. This protein is involved in the virulence of salmonellas. The protein is 28.1 kDa virulence protein (mkaB) of Salmonella typhimurium.